The chain runs to 137 residues: Cellular retinoic acid-binding protein 1 (137 aa).

The Nuclear localization signal motif lies at lysine 21 to lysine 31. An all-trans-retinoate-binding site is contributed by arginine 132–tyrosine 134.

This sequence belongs to the calycin superfamily. Fatty-acid binding protein (FABP) family.

The protein resides in the cytoplasm. Cytosolic CRABPs may regulate the access of retinoic acid to the nuclear retinoic acid receptors. This is Cellular retinoic acid-binding protein 1 (CRABP1) from Gallus gallus (Chicken).